A 390-amino-acid polypeptide reads, in one-letter code: NADH-quinone oxidoreductase subunit D (390 aa).

The protein belongs to the complex I 49 kDa subunit family. NDH-1 is composed of 14 different subunits. Subunits NuoB, C, D, E, F, and G constitute the peripheral sector of the complex.

It is found in the cell inner membrane. The enzyme catalyses a quinone + NADH + 5 H(+)(in) = a quinol + NAD(+) + 4 H(+)(out). In terms of biological role, NDH-1 shuttles electrons from NADH, via FMN and iron-sulfur (Fe-S) centers, to quinones in the respiratory chain. The immediate electron acceptor for the enzyme in this species is believed to be ubiquinone. Couples the redox reaction to proton translocation (for every two electrons transferred, four hydrogen ions are translocated across the cytoplasmic membrane), and thus conserves the redox energy in a proton gradient. This chain is NADH-quinone oxidoreductase subunit D, found in Trichlorobacter lovleyi (strain ATCC BAA-1151 / DSM 17278 / SZ) (Geobacter lovleyi).